Consider the following 122-residue polypeptide: Basic phospholipase A2 CbII (122 aa).

7 disulfides stabilise this stretch: Cys-26-Cys-115, Cys-28-Cys-44, Cys-43-Cys-95, Cys-49-Cys-122, Cys-50-Cys-88, Cys-57-Cys-81, and Cys-75-Cys-86. Ca(2+) contacts are provided by Tyr-27, Gly-29, and Gly-31. Residue His-47 is part of the active site. Asp-48 contributes to the Ca(2+) binding site. Asp-89 is a catalytic residue.

This sequence belongs to the phospholipase A2 family. Group I subfamily. D49 sub-subfamily. In terms of assembly, heterodimer of an acidic subunit (CbIalpha or CbIbeta) and a basic subunit (CbII). The acidic subunit is non-toxic, and increases the toxicity of the basic subunit. The cofactor is Ca(2+). Expressed by the venom gland.

The protein localises to the secreted. It carries out the reaction a 1,2-diacyl-sn-glycero-3-phosphocholine + H2O = a 1-acyl-sn-glycero-3-phosphocholine + a fatty acid + H(+). Its function is as follows. Heterodimer: presynaptic neurotoxin. Functionally, monomer: Snake venom phospholipase A2 (PLA2) that exhibits strong anticoagulant effects by binding to factor Xa (F10) and inhibiting the prothrombinase activity (IC(50) is 20 nM). PLA2 catalyzes the calcium-dependent hydrolysis of the 2-acyl groups in 3-sn-phosphoglycerides. The chain is Basic phospholipase A2 CbII from Pseudocerastes fieldi (Field's horned viper).